Here is a 420-residue protein sequence, read N- to C-terminus: Glycogen synthase kinase-3 beta (420 aa).

Over residues 1 to 22 the composition is skewed to polar residues; the sequence is MSGRPRTTSFAESCKPVQQPSA. The segment at 1–35 is disordered; the sequence is MSGRPRTTSFAESCKPVQQPSAFGSMKVSRDKDGS. Residue S9 is modified to Phosphoserine; by PKB/AKT1, RPS6KA3 and SGK3. A lipid anchor (S-palmitoyl cysteine) is attached at C14. The 285-residue stretch at 56–340 folds into the Protein kinase domain; the sequence is YTDTKVIGNG…PLEACAHSFF (285 aa). ATP-binding positions include 62–70 and K85; that span reads IGNGSFGVV. Catalysis depends on D181, which acts as the Proton acceptor. Y216 is subject to Phosphotyrosine. Low complexity-rich tracts occupy residues 387–401 and 409–420; these read AAST…SDAN and NNAAFASASNST. The tract at residues 387–420 is disordered; sequence AASTPTNATAASDANAGDRGQTNNAAFASASNST. Position 389 is a phosphoserine (S389). The residue at position 390 (T390) is a Phosphothreonine.

The protein belongs to the protein kinase superfamily. CMGC Ser/Thr protein kinase family. GSK-3 subfamily. In terms of assembly, monomer. Interacts with DAB2IP (via C2 domain); the interaction stimulates GSK3B kinase activation. Interacts (via C2 domain) with PPP2CA. Interacts with ARRB2, AXIN1, CABYR, DISC1, MMP2, MUC1, NIN, PRUNE1 and ZBED3. Interacts with AXIN1; the interaction mediates hyperphosphorylation of CTNNB1 leading to its ubiquitination and destruction. Interacts with and phosphorylates SNAI1. Interacts with DNM1L (via a C-terminal domain). Found in a complex composed of MACF1, APC, AXIN1, CTNNB1 and GSK3B. Interacts with SGK3. Interacts with the CLOCK-BMAL1 heterodimer. Interacts with the BMAL1. Interacts with CTNND2. The complex composed, at least, of APC, CTNNB1 and GSK3B interacts with JPT1; the interaction requires the inactive form of GSK3B (phosphorylated at 'Ser-9'). Forms a complex composed of PRKAR2A or PRKAR2B, GSK3B and GSKIP through GSKIP interaction; facilitates PKA-induced phosphorylation and regulates GSK3B activity. Interacts with GSKIP. Interacts with GID8. Interacts with PIWIL2. Interacts with LMBR1L. Interacts with DDX3X. Interacts with BIRC2. Interacts with TNFRSF10B; TNFRSF10B stimulation inhibits GSK3B kinase activity. Found in a complex with SLC39A6, SLC39A10 and with GSK3B that controls NCAM1 phosphorylation. Interacts with PKP3 (via ARM repeats); the interaction may be involved in PKP3 protein degradation. Post-translationally, phosphorylated by AKT1 and ILK1. Upon insulin-mediated signaling, the activated PKB/AKT1 and RPS6KA3 protein kinases phosphorylate and deactivate GSK3B, resulting in the dephosphorylation and activation of GYS1. Activated by phosphorylation at Tyr-216. Inactivated by phosphorylation at Ser-9. In terms of processing, mono-ADP-ribosylation by PARP10 negatively regulates kinase activity. Palmitoylated. Palmitoylation by ZDHHC4 prevents AKT1-mediated phosphorylation.

The protein localises to the cytoplasm. Its subcellular location is the nucleus. It is found in the cell membrane. It catalyses the reaction L-seryl-[tau protein] + ATP = O-phospho-L-seryl-[tau protein] + ADP + H(+). It carries out the reaction L-threonyl-[tau protein] + ATP = O-phospho-L-threonyl-[tau protein] + ADP + H(+). The catalysed reaction is L-seryl-[protein] + ATP = O-phospho-L-seryl-[protein] + ADP + H(+). The enzyme catalyses L-threonyl-[protein] + ATP = O-phospho-L-threonyl-[protein] + ADP + H(+). With respect to regulation, activated by phosphorylation at Tyr-216. In response to insulin, inhibited by phosphorylation at Ser-9 by PKB/AKT1; phosphorylation at this site causes a conformational change, preventing access of substrates to the active site. Inhibited by IL22 treatment which also triggers phosphorylation at Ser-9, promoting inactivation. Inhibited by lithium. Functionally, constitutively active protein kinase that acts as a negative regulator in the hormonal control of glucose homeostasis, Wnt signaling and regulation of transcription factors and microtubules, by phosphorylating and inactivating glycogen synthase (GYS1 or GYS2), EIF2B, CTNNB1/beta-catenin, APC, AXIN1, DPYSL2/CRMP2, JUN, NFATC1/NFATC, MAPT/TAU and MACF1. Requires primed phosphorylation of the majority of its substrates. In skeletal muscle, contributes to insulin regulation of glycogen synthesis by phosphorylating and inhibiting GYS1 activity and hence glycogen synthesis. May also mediate the development of insulin resistance by regulating activation of transcription factors. Regulates protein synthesis by controlling the activity of initiation factor 2B (EIF2BE/EIF2B5) in the same manner as glycogen synthase. In Wnt signaling, GSK3B forms a multimeric complex with APC, AXIN1 and CTNNB1/beta-catenin and phosphorylates the N-terminus of CTNNB1 leading to its degradation mediated by ubiquitin/proteasomes. Phosphorylates JUN at sites proximal to its DNA-binding domain, thereby reducing its affinity for DNA. Phosphorylates NFATC1/NFATC on conserved serine residues promoting NFATC1/NFATC nuclear export, shutting off NFATC1/NFATC gene regulation, and thereby opposing the action of calcineurin. Phosphorylates MAPT/TAU on 'Thr-548', decreasing significantly MAPT/TAU ability to bind and stabilize microtubules. MAPT/TAU is the principal component of neurofibrillary tangles in Alzheimer disease. Plays an important role in ERBB2-dependent stabilization of microtubules at the cell cortex. Phosphorylates MACF1, inhibiting its binding to microtubules which is critical for its role in bulge stem cell migration and skin wound repair. Probably regulates NF-kappa-B (NFKB1) at the transcriptional level and is required for the NF-kappa-B-mediated anti-apoptotic response to TNF-alpha (TNF/TNFA). Negatively regulates replication in pancreatic beta-cells, resulting in apoptosis, loss of beta-cells and diabetes. Through phosphorylation of the anti-apoptotic protein MCL1, may control cell apoptosis in response to growth factors deprivation. Phosphorylates MUC1 in breast cancer cells, decreasing the interaction of MUC1 with CTNNB1/beta-catenin. Is necessary for the establishment of neuronal polarity and axon outgrowth. Phosphorylates MARK2, leading to inhibition of its activity. Phosphorylates SIK1 at 'Thr-182', leading to sustainment of its activity. Phosphorylates ZC3HAV1 which enhances its antiviral activity. Phosphorylates SNAI1, leading to its ubiquitination and proteasomal degradation. Phosphorylates SFPQ at 'Thr-687' upon T-cell activation. Phosphorylates NR1D1 st 'Ser-55' and 'Ser-59' and stabilizes it by protecting it from proteasomal degradation. Regulates the circadian clock via phosphorylation of the major clock components including BMAL1, CLOCK and PER2. Phosphorylates CLOCK AT 'Ser-427' and targets it for proteasomal degradation. Phosphorylates BMAL1 at 'Ser-17' and 'Ser-21' and primes it for ubiquitination and proteasomal degradation. Phosphorylates FBXL2 at 'Thr-404' and primes it for ubiquitination by the SCF(FBXO3) complex and proteasomal degradation. Phosphorylates OGT at 'Ser-3' or 'Ser-4' which positively regulates its activity. Phosphorylates MYCN in neuroblastoma cells which may promote its degradation. Regulates the circadian rhythmicity of hippocampal long-term potentiation and BMAL1 and PER2 expression. Acts as a regulator of autophagy by mediating phosphorylation of KAT5/TIP60 under starvation conditions, activating KAT5/TIP60 acetyltransferase activity and promoting acetylation of key autophagy regulators, such as ULK1 and RUBCNL/Pacer. Negatively regulates extrinsic apoptotic signaling pathway via death domain receptors. Promotes the formation of an anti-apoptotic complex, made of DDX3X, BRIC2 and GSK3B, at death receptors, including TNFRSF10B. The anti-apoptotic function is most effective with weak apoptotic signals and can be overcome by stronger stimulation. Phosphorylates E2F1, promoting the interaction between E2F1 and USP11, stabilizing E2F1 and promoting its activity. Phosphorylates mTORC2 complex component RICTOR at 'Ser-1235' in response to endoplasmic stress, inhibiting mTORC2. Phosphorylates FXR1, promoting FXR1 ubiquitination by the SCF(FBXO4) complex and FXR1 degradation by the proteasome. Phosphorylates interleukin-22 receptor subunit IL22RA1, preventing its proteasomal degradation. The polypeptide is Glycogen synthase kinase-3 beta (Spermophilus citellus (European ground squirrel)).